Reading from the N-terminus, the 453-residue chain is Cysteine--tRNA ligase (453 aa).

C31 contributes to the Zn(2+) binding site. Positions P33–N43 match the 'HIGH' region motif. Zn(2+) contacts are provided by C213, H238, and E242. Residues K271–S275 carry the 'KMSKS' region motif. K274 is an ATP binding site.

It belongs to the class-I aminoacyl-tRNA synthetase family. As to quaternary structure, monomer. It depends on Zn(2+) as a cofactor.

The protein localises to the cytoplasm. The enzyme catalyses tRNA(Cys) + L-cysteine + ATP = L-cysteinyl-tRNA(Cys) + AMP + diphosphate. In Pelagibacter ubique (strain HTCC1062), this protein is Cysteine--tRNA ligase.